The sequence spans 189 residues: Cell division protein SepF (189 aa).

The interval Glu18–Asp64 is disordered. Residues His22–Lys35 show a composition bias toward basic and acidic residues.

Belongs to the SepF family. In terms of assembly, homodimer. Interacts with FtsZ.

It is found in the cytoplasm. Its function is as follows. Cell division protein that is part of the divisome complex and is recruited early to the Z-ring. Probably stimulates Z-ring formation, perhaps through the cross-linking of FtsZ protofilaments. Its function overlaps with FtsA. The protein is Cell division protein SepF of Streptococcus thermophilus (strain ATCC BAA-250 / LMG 18311).